The sequence spans 485 residues: Glutamate--tRNA ligase (485 aa).

A 'HIGH' region motif is present at residues 11–21 (PSPTGHLHIGG). The 'KMSKS' region signature appears at 252–256 (KMSKR). Residue lysine 255 participates in ATP binding.

This sequence belongs to the class-I aminoacyl-tRNA synthetase family. Glutamate--tRNA ligase type 1 subfamily. As to quaternary structure, monomer.

The protein resides in the cytoplasm. The catalysed reaction is tRNA(Glu) + L-glutamate + ATP = L-glutamyl-tRNA(Glu) + AMP + diphosphate. Catalyzes the attachment of glutamate to tRNA(Glu) in a two-step reaction: glutamate is first activated by ATP to form Glu-AMP and then transferred to the acceptor end of tRNA(Glu). This is Glutamate--tRNA ligase from Halalkalibacterium halodurans (strain ATCC BAA-125 / DSM 18197 / FERM 7344 / JCM 9153 / C-125) (Bacillus halodurans).